The chain runs to 511 residues: 2-isopropylmalate synthase (511 aa).

Residues 6–269 (IIIFDTTLRD…YTDIKCENIF (264 aa)) form the Pyruvate carboxyltransferase domain. Mn(2+) contacts are provided by Asp-15, His-203, His-205, and Asn-239. The interval 394 to 511 (ILEKLSVISG…SLKVEERKMA (118 aa)) is regulatory domain.

Belongs to the alpha-IPM synthase/homocitrate synthase family. LeuA type 1 subfamily. In terms of assembly, homodimer. It depends on Mn(2+) as a cofactor.

The protein localises to the cytoplasm. The enzyme catalyses 3-methyl-2-oxobutanoate + acetyl-CoA + H2O = (2S)-2-isopropylmalate + CoA + H(+). It functions in the pathway amino-acid biosynthesis; L-leucine biosynthesis; L-leucine from 3-methyl-2-oxobutanoate: step 1/4. Its function is as follows. Catalyzes the condensation of the acetyl group of acetyl-CoA with 3-methyl-2-oxobutanoate (2-ketoisovalerate) to form 3-carboxy-3-hydroxy-4-methylpentanoate (2-isopropylmalate). In Campylobacter jejuni subsp. jejuni serotype O:6 (strain 81116 / NCTC 11828), this protein is 2-isopropylmalate synthase.